Reading from the N-terminus, the 154-residue chain is Cytochrome c' (154 aa).

The N-terminal stretch at 1–23 (MKHVLASTAAGLMALGLASSAIA) is a signal peptide. Arg-35, Gln-36, Arg-95, Cys-144, Cys-147, and His-148 together coordinate heme c.

In terms of assembly, homodimer. Post-translationally, binds 1 heme c group covalently per subunit.

Cytochrome c' is the most widely occurring bacterial c-type cytochrome. Cytochromes c' are high-spin proteins and the heme has no sixth ligand. Their exact function is not known. In Allochromatium vinosum (strain ATCC 17899 / DSM 180 / NBRC 103801 / NCIMB 10441 / D) (Chromatium vinosum), this protein is Cytochrome c' (cycA).